A 64-amino-acid polypeptide reads, in one-letter code: Large ribosomal subunit protein bL33 (64 aa).

The protein belongs to the bacterial ribosomal protein bL33 family.

This Thermosynechococcus vestitus (strain NIES-2133 / IAM M-273 / BP-1) protein is Large ribosomal subunit protein bL33.